Reading from the N-terminus, the 169-residue chain is Probable prefoldin subunit 3 (169 aa).

The protein belongs to the prefoldin subunit alpha family. In terms of assembly, heterohexamer of two PFD-alpha type and four PFD-beta type subunits.

Binds specifically to cytosolic chaperonin (c-CPN) and transfers target proteins to it. Binds to nascent polypeptide chain and promotes folding in an environment in which there are many competing pathways for nonnative proteins. This Schizosaccharomyces pombe (strain 972 / ATCC 24843) (Fission yeast) protein is Probable prefoldin subunit 3.